Consider the following 432-residue polypeptide: Acyl-coenzyme A thioesterase 3 (432 aa).

Catalysis depends on charge relay system residues Ser243, Asp337, and His371. The Microbody targeting signal motif lies at 430-432 (AKL).

It belongs to the C/M/P thioester hydrolase family. Widely expressed. Highly expressed in the kidney, expressed at low level in the liver. Isoform 2 is expressed in the kidney, but not in the liver. Isoform 1 is liver-specific. Highly expressed in kidney (at protein level).

It localises to the peroxisome. The catalysed reaction is hexadecanoyl-CoA + H2O = hexadecanoate + CoA + H(+). The enzyme catalyses decanoyl-CoA + H2O = decanoate + CoA + H(+). It catalyses the reaction dodecanoyl-CoA + H2O = dodecanoate + CoA + H(+). It carries out the reaction tetradecanoyl-CoA + H2O = tetradecanoate + CoA + H(+). The catalysed reaction is octadecanoyl-CoA + H2O = octadecanoate + CoA + H(+). The enzyme catalyses eicosanoyl-CoA + H2O = eicosanoate + CoA + H(+). It catalyses the reaction (9Z)-octadecenoyl-CoA + H2O = (9Z)-octadecenoate + CoA + H(+). It carries out the reaction (9Z,12Z)-octadecadienoyl-CoA + H2O = (9Z,12Z)-octadecadienoate + CoA + H(+). The catalysed reaction is (5Z,8Z,11Z,14Z)-eicosatetraenoyl-CoA + H2O = (5Z,8Z,11Z,14Z)-eicosatetraenoate + CoA + H(+). The enzyme catalyses tetracosanoyl-CoA + H2O = tetracosanoate + CoA + H(+). It catalyses the reaction hexacosanoyl-CoA + H2O = hexacosanoate + CoA + H(+). It carries out the reaction docosanoyl-CoA + H2O = docosanoate + CoA + H(+). The catalysed reaction is (9Z)-hexadecenoyl-CoA + H2O = (9Z)-hexadecenoate + CoA + H(+). Its pathway is lipid metabolism; fatty acid metabolism. Catalyzes the hydrolysis of acyl-CoAs into free fatty acids and coenzyme A (CoASH), regulating their respective intracellular levels. Mainly active on long-chain acyl-CoAs. May have a function in termination of beta-oxidation of fatty acids. The protein is Acyl-coenzyme A thioesterase 3 (Acot3) of Mus musculus (Mouse).